The chain runs to 199 residues: DNA repair RAD52-like protein 2, chloroplastic (199 aa).

A chloroplast-targeting transit peptide spans 1-40 (MALQVQQTSAAFTISSPSTAAARIKLSPFRTVAVNRGVRC). Residue Ser-41 is modified to N-acetylserine.

The protein belongs to the RAD52 family. Expressed in roots and shoots. Expressed at low levels in cauline leaves, flower buds, flowers and siliques.

Its subcellular location is the plastid. The protein resides in the chloroplast. Involved in double-stranded DNA break repair. This Arabidopsis thaliana (Mouse-ear cress) protein is DNA repair RAD52-like protein 2, chloroplastic.